The following is a 341-amino-acid chain: Annexin A1 isoform p35 (341 aa).

Annexin repeat units follow at residues 37–108 (FDPS…ALLK), 109–180 (TPAQ…SLAK), 192–263 (ELAE…ALVK), and 267–338 (SKPA…ALCG).

The protein belongs to the annexin family. Post-translationally, in contrast to mammalian homologs, does not contain a tyrosine phosphorylation site in the N-terminal part.

The protein localises to the nucleus. It is found in the cytoplasm. It localises to the cell projection. Its subcellular location is the cilium. The protein resides in the basolateral cell membrane. In terms of biological role, calcium/phospholipid-binding protein which promotes membrane fusion and is involved in exocytosis. This protein regulates phospholipase A2 activity. It seems to bind from two to four calcium ions with high affinity. The chain is Annexin A1 isoform p35 (CP35) from Columba livia (Rock dove).